Here is a 473-residue protein sequence, read N- to C-terminus: Cannabinoid receptor 1 (473 aa).

At 1-121 (MKSILDGLAD…LNPSQQLAIA (121 aa)) the chain is on the extracellular side. The required for mitochondrial localization stretch occupies residues 2 to 23 (KSILDGLADTTFRTITTDLLYV). 2 N-linked (GlcNAc...) asparagine glycosylation sites follow: Asn-78 and Asn-84. The chain crosses the membrane as a helical span at residues 122 to 142 (VLSLTLGTFTVLENLLVLCVI). The Cytoplasmic segment spans residues 143 to 155 (LHSRSLRCRPSYH). A helical membrane pass occupies residues 156 to 176 (FIGSLAVADLLGSVIFVYSFV). At 177–188 (DFHVFHRKDSPN) the chain is on the extracellular side. A helical membrane pass occupies residues 189–209 (VFLFKLGGVTASFTASVGSLF). Topologically, residues 210 to 233 (LTAIDRYISIHRPLAYKRIVTRPK) are cytoplasmic. Residues 234–254 (AVVAFCLMWTIAIVIAVLPLL) traverse the membrane as a helical segment. The Extracellular portion of the chain corresponds to 255–278 (GWNCKKLQSVCSDIFPLIDETYLM). Residues 279–299 (FWIGVTSVLLLFIVYAYMYIL) traverse the membrane as a helical segment. Over 300-345 (WKAHSHAVRMIQRGTQKSIIIHTSEDGKVQVTRPDQARMDIRLAKT) the chain is Cytoplasmic. Residues 346–366 (LVLILVVLIICWGPLLAIMVY) traverse the membrane as a helical segment. The Extracellular segment spans residues 367 to 378 (DVFGKMNKLIKT). A helical membrane pass occupies residues 379-399 (VFAFCSMLCLLNSTVNPIIYA). Over 400-473 (LRSKDLRHAF…VSTDTSAEAL (74 aa)) the chain is Cytoplasmic. Cys-416 is lipidated: S-palmitoyl cysteine. Residues Ser-426 and Ser-430 each carry the phosphoserine modification.

It belongs to the G-protein coupled receptor 1 family. In terms of assembly, interacts (via C-terminus) with CNRIP1. Associates with G protein alpha subunits, including G(i) alpha-1/GNAI1, G(i) alpha-3/GNAI3 and G(o)-alpha/GNAO1; palmitoylation is important for interaction with GNAI3 and GNAO1. Palmitoylation at Cys-416 is important for recruitment at both plasma membrane and lipid rafts and association with G protein alpha subunits. Expressed in brain neurons (at protein level). Detected throughout the striatum, cortex and hippocampus, with highest levels in the lateral striatum. In rostral brain regions, high expression levels in the dorsal lateral striatum, while in the caudal brain regions, high levels are observed in the ventral lateral striatum. Expressed in neurons. In the hypothalamus, expressed in both GABAergic and glutamatergic presynaptic terminals of POMC neurons (at protein level). Expressed in striated muscles, including skeletal muscles (gastrocnemius and rectus abdominis) and myocardium (at protein level). Expressed in the liver, with highest levels in Kupffer cells and lower levels in endothelial cells as well as hepatocytes, particularly in perivascular areas (at protein level). The hepatic expression level is up-regulated in obese mice compared to lean animals.

The protein resides in the cell membrane. It localises to the mitochondrion outer membrane. Its subcellular location is the cell projection. It is found in the axon. The protein localises to the presynapse. Its activity is regulated as follows. Hemopressin, a peptide derived from hemoglobin subunit alpha (HBA1 and/or HBA2), acts as an antagonist peptide: hemopressin-binding efficiently blocks cannabinoid receptor CNR1 and subsequent signaling. Functionally, G-protein coupled receptor for cannabinoids, including endocannabinoids (eCBs), such as N-arachidonoylethanolamide (also called anandamide or AEA) and 2-arachidonoylglycerol (2-AG). Mediates many cannabinoid-induced effects, acting, among others, on food intake, memory loss, gastrointestinal motility, catalepsy, ambulatory activity, anxiety, chronic pain. Signaling typically involves reduction in cyclic AMP. In the hypothalamus, may have a dual effect on mitochondrial respiration depending upon the agonist dose and possibly upon the cell type. Increases respiration at low doses, while decreases respiration at high doses. At high doses, CNR1 signal transduction involves G-protein alpha-i protein activation and subsequent inhibition of mitochondrial soluble adenylate cyclase, decrease in cyclic AMP concentration, inhibition of protein kinase A (PKA)-dependent phosphorylation of specific subunits of the mitochondrial electron transport system, including NDUFS2. In the hypothalamus, inhibits leptin-induced reactive oxygen species (ROS) formation and mediates cannabinoid-induced increase in SREBF1 and FASN gene expression. In response to cannabinoids, drives the release of orexigenic beta-endorphin, but not that of melanocyte-stimulating hormone alpha/alpha-MSH, from hypothalamic POMC neurons, hence promoting food intake. In the hippocampus, regulates cellular respiration and energy production in response to cannabinoids. Involved in cannabinoid-dependent depolarization-induced suppression of inhibition (DSI), a process in which depolarization of CA1 postsynaptic pyramidal neurons mobilizes eCBs, which retrogradely activate presynaptic CB1 receptors, transiently decreasing GABAergic inhibitory neurotransmission. Also reduces excitatory synaptic transmission. In superior cervical ganglions and cerebral vascular smooth muscle cells, inhibits voltage-gated Ca(2+) channels in a constitutive, as well as agonist-dependent manner. In cerebral vascular smooth muscle cells, cannabinoid-induced inhibition of voltage-gated Ca(2+) channels leads to vasodilation and decreased vascular tone. Induces leptin production in adipocytes and reduces LRP2-mediated leptin clearance in the kidney, hence participating in hyperleptinemia. In adipose tissue, CNR1 signaling leads to increased expression of SREBF1, ACACA and FASN genes. In the liver, activation by endocannabinoids leads to increased de novo lipogenesis and reduced fatty acid catabolism, associated with increased expression of SREBF1/SREBP-1, GCK, ACACA, ACACB and FASN genes. May also affect de novo cholesterol synthesis and HDL-cholesteryl ether uptake. Peripherally modulates energy metabolism. In high carbohydrate diet-induced obesity, may decrease the expression of mitochondrial dihydrolipoyl dehydrogenase/DLD in striated muscles, as well as that of selected glucose/ pyruvate metabolic enzymes, hence affecting energy expenditure through mitochondrial metabolism. In response to cannabinoid anandamide, elicits a pro-inflammatory response in macrophages, which involves NLRP3 inflammasome activation and IL1B and IL18 secretion. In macrophages infiltrating pancreatic islets, this process may participate in the progression of type-2 diabetes and associated loss of pancreatic beta-cells. In Mus musculus (Mouse), this protein is Cannabinoid receptor 1 (Cnr1).